Here is a 57-residue protein sequence, read N- to C-terminus: Sec-independent protein translocase protein TatA (57 aa).

A helical membrane pass occupies residues 1-21 (MGISVWQLLIILLIVVMLFGT). The disordered stretch occupies residues 37-57 (GFRKSVSDGETTTQAEASSRS). Residues 44-57 (DGETTTQAEASSRS) show a composition bias toward polar residues.

The protein belongs to the TatA/E family. In terms of assembly, the Tat system comprises two distinct complexes: a TatABC complex, containing multiple copies of TatA, TatB and TatC subunits, and a separate TatA complex, containing only TatA subunits. Substrates initially bind to the TatABC complex, which probably triggers association of the separate TatA complex to form the active translocon.

The protein localises to the cell inner membrane. Part of the twin-arginine translocation (Tat) system that transports large folded proteins containing a characteristic twin-arginine motif in their signal peptide across membranes. TatA could form the protein-conducting channel of the Tat system. The protein is Sec-independent protein translocase protein TatA of Stutzerimonas stutzeri (Pseudomonas stutzeri).